The primary structure comprises 235 residues: tRNA (guanine-N(1)-)-methyltransferase (235 aa).

S-adenosyl-L-methionine-binding positions include G112 and 132 to 137 (IGDYVI).

Belongs to the RNA methyltransferase TrmD family. In terms of assembly, homodimer.

The protein resides in the cytoplasm. The enzyme catalyses guanosine(37) in tRNA + S-adenosyl-L-methionine = N(1)-methylguanosine(37) in tRNA + S-adenosyl-L-homocysteine + H(+). Functionally, specifically methylates guanosine-37 in various tRNAs. This is tRNA (guanine-N(1)-)-methyltransferase from Anaplasma marginale (strain St. Maries).